The sequence spans 459 residues: E3 ubiquitin-protein ligase RNF25 (459 aa).

The RWD domain maps to 18 to 128 (SEVEVLESIY…EKGKEILTDN (111 aa)). Cys135, Cys138, Cys153, His155, His158, Cys161, Cys198, and Cys201 together coordinate Zn(2+). The RING-type zinc finger occupies 135-202 (CVICLYGFQE…AVGVQCPVCR (68 aa)). Disordered regions lie at residues 268 to 309 (PPAP…PPLP) and 322 to 459 (TRSN…KDGS). Over residues 282 to 303 (KGSQPPSTLAAELSTSPAVQST) the composition is skewed to polar residues. Basic and acidic residues-rich tracts occupy residues 349–370 (QPER…RDTQ), 378–389 (PLKEPMDLKPEP), 413–424 (RTRDCVRWERSK), and 446–459 (TRRE…KDGS). Ser450 is subject to Phosphoserine.

Belongs to the RNF25 family. As to quaternary structure, interacts with UBE2D2, and may also interact with UBE2E1 and UBE2E3. Interacts with RELA/p65. Post-translationally, ubiquitinated; autoubiquitinated.

Its subcellular location is the cytoplasm. It catalyses the reaction S-ubiquitinyl-[E2 ubiquitin-conjugating enzyme]-L-cysteine + [acceptor protein]-L-lysine = [E2 ubiquitin-conjugating enzyme]-L-cysteine + N(6)-ubiquitinyl-[acceptor protein]-L-lysine.. It participates in protein modification; protein ubiquitination. Its function is as follows. E3 ubiquitin-protein ligase that plays a key role in the RNF14-RNF25 translation quality control pathway, a pathway that takes place when a ribosome has stalled during translation, and which promotes ubiquitination and degradation of translation factors on stalled ribosomes. Catalyzes ubiquitination of RPS27A in response to ribosome collisions, promoting activation of RNF14. RNF25 catalyzes ubiquitination of other ribosomal proteins on stalled ribosomes, such as RPL0, RPL1, RPL12, RPS13 and RPS17. Also involved in ubiquitination and degradation of stalled ETF1/eRF1. Independently of its function in the response to stalled ribosomes, mediates ubiquitination and subsequent proteasomal degradation of NKD2. May also stimulate transcription mediated by NF-kappa-B via its interaction with RELA/p65. This chain is E3 ubiquitin-protein ligase RNF25, found in Homo sapiens (Human).